A 258-amino-acid polypeptide reads, in one-letter code: Eukaryotic translation initiation factor 3 subunit J (258 aa).

The span at 1–11 (MAAAAAAAGDS) shows a compositional bias: low complexity. Residues 1-108 (MAAAAAAAGD…LEEPEEPKVL (108 aa)) form a disordered region. Ala2 bears the N-acetylalanine mark. Positions 2-69 (AAAAAAAGDS…KEEAEVKPEV (68 aa)) are sufficient for interaction with EIF3B. Residues Ser11, Ser13, and Ser20 each carry the phosphoserine modification. Residues 40–59 (EGEDEDEDVKDNWDDDDDEK) show a composition bias toward acidic residues. A compositionally biased stretch (basic and acidic residues) spans 60 to 106 (KEEAEVKPEVKISEKKKIAEKIKEKERQQKKRQEEIKKRLEEPEEPK). Residues 70–135 (KISEKKKIAE…ESDLELAKET (66 aa)) are a coiled coil. Residue Lys106 forms a Glycyl lysine isopeptide (Lys-Gly) (interchain with G-Cter in SUMO2) linkage. The residue at position 109 (Thr109) is a Phosphothreonine. At Ser127 the chain carries Phosphoserine. Residues 217 to 238 (SKAKKKKKGVVPGGGLKATMKD) are disordered. The tract at residues 243–258 (YGGYDGGYVQDYEDFM) is promotes stable association with the 40S ribosome. At Tyr254 the chain carries Phosphotyrosine.

As to quaternary structure, component of the eukaryotic translation initiation factor 3 (eIF-3) complex, which is composed of 13 subunits: EIF3A, EIF3B, EIF3C, EIF3D, EIF3E, EIF3F, EIF3G, EIF3H, EIF3I, EIF3J, EIF3K, EIF3L and EIF3M. The eIF-3 complex appears to include 3 stable modules: module A is composed of EIF3A, EIF3B, EIF3G and EIF3I; module B is composed of EIF3F, EIF3H, and EIF3M; and module C is composed of EIF3C, EIF3D, EIF3E, EIF3K and EIF3L. EIF3C of module C binds EIF3B of module A and EIF3H of module B, thereby linking the three modules. EIF3J is a labile subunit that binds to the eIF-3 complex via EIF3B. The eIF-3 complex interacts with RPS6KB1 under conditions of nutrient depletion. Mitogenic stimulation leads to binding and activation of a complex composed of MTOR and RPTOR, leading to phosphorylation and release of RPS6KB1 and binding of EIF4B to eIF-3. Post-translationally, phosphorylated. Phosphorylation is enhanced upon serum stimulation.

The protein localises to the cytoplasm. Component of the eukaryotic translation initiation factor 3 (eIF-3) complex, which is required for several steps in the initiation of protein synthesis. The eIF-3 complex associates with the 40S ribosome and facilitates the recruitment of eIF-1, eIF-1A, eIF-2:GTP:methionyl-tRNAi and eIF-5 to form the 43S pre-initiation complex (43S PIC). The eIF-3 complex stimulates mRNA recruitment to the 43S PIC and scanning of the mRNA for AUG recognition. The eIF-3 complex is also required for disassembly and recycling of post-termination ribosomal complexes and subsequently prevents premature joining of the 40S and 60S ribosomal subunits prior to initiation. The eIF-3 complex specifically targets and initiates translation of a subset of mRNAs involved in cell proliferation, including cell cycling, differentiation and apoptosis, and uses different modes of RNA stem-loop binding to exert either translational activation or repression. This is Eukaryotic translation initiation factor 3 subunit J from Homo sapiens (Human).